The following is a 210-amino-acid chain: RNA binding protein, mRNA processing factor 2 (210 aa).

Positions Met-1–His-10 are enriched in basic and acidic residues. Residues Met-1–Pro-25 are disordered. Ser-2 bears the N-acetylserine mark. The RRM domain occupies Arg-31 to Ala-108. The tract at residues Asp-41–Phe-51 is important for homodimerization.

Homodimer. Interacts with EEF2.

It localises to the cytoplasm. The protein localises to the nucleus. It is found in the stress granule. Its function is as follows. RNA-binding protein involved in the regulation of smooth muscle cell differentiation and proliferation in the gastrointestinal system. Binds NOG mRNA, the major inhibitor of the bone morphogenetic protein (BMP) pathway. Mediates an increase of NOG mRNA levels, thereby contributing to the negative regulation of BMP signaling pathway and promoting reversible dedifferentiation and proliferation of smooth muscle cells. Acts as a pre-mRNA alternative splicing regulator. Mediates ACTN1 and FLNB alternative splicing. Likely binds to mRNA tandem CAC trinucleotide or CA dinucleotide motifs. The polypeptide is RNA binding protein, mRNA processing factor 2 (Rbpms2) (Rattus norvegicus (Rat)).